Reading from the N-terminus, the 379-residue chain is MSQNTSVGIVTPQKIPFEMPLVLENGKTLPRFDLMIETYGELNAEKNNAVLICHALSGNHHVAGKHSAEDKYTGWWDNMVGPGKPIDTERFFVVGLNNLGGCDGSSGPLSINPETGREYGADFPMVTVKDWVKSQAALADYLGIEQWAAVVGGSLGGMQALQWAISYPERVRHALVIASAPKLSTQNIAFNDVARQAILTDPDFNEGHYRSHNTVPARGLRIARMMGHITYLAEDGLGKKFGRDLRSNGYQYGYSVEFEVESYLRYQGDKFVGRFDANTYLLMTKALDYFDPAADFGNSLTRAVQDVQAKFFVASFSTDWRFAPERSHELVKALIAAQKSVQYIEVKSAHGHDAFLMEDEAYMRAVTAYMNNVDKDCRL.

Residues 48-357 (NAVLICHALS…SAHGHDAFLM (310 aa)) form the AB hydrolase-1 domain. Ser154 serves as the catalytic Nucleophile. Arg224 lines the substrate pocket. Residues Asp319 and His352 contribute to the active site. Asp353 serves as a coordination point for substrate.

It belongs to the AB hydrolase superfamily. MetX family. As to quaternary structure, homodimer.

Its subcellular location is the cytoplasm. The catalysed reaction is L-homoserine + succinyl-CoA = O-succinyl-L-homoserine + CoA. The protein operates within amino-acid biosynthesis; L-methionine biosynthesis via de novo pathway; O-succinyl-L-homoserine from L-homoserine: step 1/1. With respect to regulation, activity increases in the presence of MetW. Its function is as follows. Transfers a succinyl group from succinyl-CoA to L-homoserine, forming succinyl-L-homoserine. This Neisseria gonorrhoeae protein is Homoserine O-succinyltransferase.